The sequence spans 277 residues: 2-dehydro-3-deoxyphosphooctonate aldolase (277 aa).

It belongs to the KdsA family.

Its subcellular location is the cytoplasm. It carries out the reaction D-arabinose 5-phosphate + phosphoenolpyruvate + H2O = 3-deoxy-alpha-D-manno-2-octulosonate-8-phosphate + phosphate. Its pathway is carbohydrate biosynthesis; 3-deoxy-D-manno-octulosonate biosynthesis; 3-deoxy-D-manno-octulosonate from D-ribulose 5-phosphate: step 2/3. The protein operates within bacterial outer membrane biogenesis; lipopolysaccharide biosynthesis. This chain is 2-dehydro-3-deoxyphosphooctonate aldolase, found in Hydrogenovibrio crunogenus (strain DSM 25203 / XCL-2) (Thiomicrospira crunogena).